A 198-amino-acid polypeptide reads, in one-letter code: Fucoxanthin-chlorophyll a-c binding protein B, chloroplastic (198 aa).

The transit peptide at 1–31 directs the protein to the chloroplast; it reads MKFTVFASLFASAAAFAPAQQAARTSVATNM. The next 3 membrane-spanning stretches (helical) occupy residues 73 to 94, 114 to 134, and 174 to 196; these read ISML…GGDI, IPQA…TSVM, and GRAA…NILP.

Belongs to the fucoxanthin chlorophyll protein family. The LHC complex of chromophytic algae is composed of fucoxanthin, chlorophyll A and C bound non-covalently by fucoxanthin chlorophyll proteins (FCPs). The ratio of the pigments in LHC; fucoxanthin: chlorophyll C: chlorophyll A; (0.6-1): (0.1-0.3): (1).

The protein localises to the plastid. It localises to the chloroplast thylakoid membrane. Functionally, the light-harvesting complex (LHC) functions as a light receptor, it captures and delivers excitation energy to photosystems with which it is closely associated. Energy is transferred from the carotenoid and chlorophyll C (or B) to chlorophyll A and the photosynthetic reaction centers where it is used to synthesize ATP and reducing power. This Phaeodactylum tricornutum (Diatom) protein is Fucoxanthin-chlorophyll a-c binding protein B, chloroplastic (FCPB).